The primary structure comprises 693 residues: Elongation factor G (693 aa).

A tr-type G domain is found at 8 to 282; the sequence is EKTRNIGIMA…AVIDYLPSPL (275 aa). GTP contacts are provided by residues 17–24, 81–85, and 135–138; these read AHVDAGKT, DTPGH, and NKMD.

It belongs to the TRAFAC class translation factor GTPase superfamily. Classic translation factor GTPase family. EF-G/EF-2 subfamily.

It localises to the cytoplasm. In terms of biological role, catalyzes the GTP-dependent ribosomal translocation step during translation elongation. During this step, the ribosome changes from the pre-translocational (PRE) to the post-translocational (POST) state as the newly formed A-site-bound peptidyl-tRNA and P-site-bound deacylated tRNA move to the P and E sites, respectively. Catalyzes the coordinated movement of the two tRNA molecules, the mRNA and conformational changes in the ribosome. This Streptococcus gordonii (strain Challis / ATCC 35105 / BCRC 15272 / CH1 / DL1 / V288) protein is Elongation factor G.